Reading from the N-terminus, the 307-residue chain is Elongation factor Ts (307 aa).

The involved in Mg(2+) ion dislocation from EF-Tu stretch occupies residues 80 to 83; that stretch reads TDFV.

The protein belongs to the EF-Ts family.

It is found in the cytoplasm. Functionally, associates with the EF-Tu.GDP complex and induces the exchange of GDP to GTP. It remains bound to the aminoacyl-tRNA.EF-Tu.GTP complex up to the GTP hydrolysis stage on the ribosome. The polypeptide is Elongation factor Ts (Nitrobacter hamburgensis (strain DSM 10229 / NCIMB 13809 / X14)).